The sequence spans 747 residues: Endoglucanase D (747 aa).

A signal peptide spans 1–39 (MHSASRTRARTRVRTAVSGLLAATVLAAPLTLVAAPAQA). Catalysis depends on Glu208, which acts as the Proton donor. The Nucleophile role is filled by Glu349. The interval 456–475 (APTGLRAGTPTASTVPLTWS) is disordered. Fibronectin type-III domains lie at 456-543 (APTG…TAAG) and 552-639 (VPTG…TAPD). The segment covering 465 to 475 (PTASTVPLTWS) has biased composition (polar residues). The CBM2 domain occupies 638–747 (PDPTTGSCAV…TVGGATCTTR (110 aa)).

This sequence belongs to the glycosyl hydrolase 5 (cellulase A) family.

The catalysed reaction is Endohydrolysis of (1-&gt;4)-beta-D-glucosidic linkages in cellulose, lichenin and cereal beta-D-glucans.. It participates in glycan metabolism; cellulose degradation. This chain is Endoglucanase D (cenD), found in Cellulomonas fimi.